The following is a 368-amino-acid chain: Probable dual-specificity RNA methyltransferase RlmN (368 aa).

E109 serves as the catalytic Proton acceptor. The Radical SAM core domain maps to Y115–E355. Residues C122 and C360 are joined by a disulfide bond. [4Fe-4S] cluster contacts are provided by C129, C133, and C136. S-adenosyl-L-methionine is bound by residues G184–E185, S218, S241–H243, and N317. C360 serves as the catalytic S-methylcysteine intermediate.

It belongs to the radical SAM superfamily. RlmN family. [4Fe-4S] cluster serves as cofactor.

The protein localises to the cytoplasm. The enzyme catalyses adenosine(2503) in 23S rRNA + 2 reduced [2Fe-2S]-[ferredoxin] + 2 S-adenosyl-L-methionine = 2-methyladenosine(2503) in 23S rRNA + 5'-deoxyadenosine + L-methionine + 2 oxidized [2Fe-2S]-[ferredoxin] + S-adenosyl-L-homocysteine. It catalyses the reaction adenosine(37) in tRNA + 2 reduced [2Fe-2S]-[ferredoxin] + 2 S-adenosyl-L-methionine = 2-methyladenosine(37) in tRNA + 5'-deoxyadenosine + L-methionine + 2 oxidized [2Fe-2S]-[ferredoxin] + S-adenosyl-L-homocysteine. In terms of biological role, specifically methylates position 2 of adenine 2503 in 23S rRNA and position 2 of adenine 37 in tRNAs. The chain is Probable dual-specificity RNA methyltransferase RlmN from Streptomyces griseus subsp. griseus (strain JCM 4626 / CBS 651.72 / NBRC 13350 / KCC S-0626 / ISP 5235).